The sequence spans 675 residues: MVSANGDLHLPISNEQCMPENNGSLGFEAPTPRQILRVTLNLKYLIDKVVPIVYDPNDIVCDHSEILSPKVVKLAYEACGGNPKDKANKRKYQSVIIFSLLKVCEWYSILATMEVHNAKLYETRNLASQQLCKLLIEREETRDLQFLFMQLLLRRYVINENDEDQEPLNALELATDMHCTTVIGSSGFQRCLKWIWRGWIVQNGLDPTTFIKDDSLAEVSLISHFNPVRLKAPVYQNYLQMIFSFLFLGLYTLVVNGKDSERVQSFDLLESIFYVFNTGFILDELTKLYYIGYAHLSFWNLFNDTTYLIITFAMGFRAMSVTPLNAKYSSEDWDKISYRVLSCAAPFVWSRLLLYLESQRFIGIMLVILKHMMKESIVFFFLLFLIMIGFTQGFLGLDSADGKRDITGPILGNLTITVLGLGSFDVFEEFAPPYAAILYYGYYFIVSVILLNILIALYSTAYQKVIDNADDEYMALMSQKTLRYIRAPDEDVYVSPLNLIEVFMTPIFRILPPKRAKDLSYTVMTIVYSPFLLLISVKETREARRIKYNRMKRLNDDANEYDTPWDLTDGYLDDDDGLFSDNRNSGMRATQLKNSRSLKLQRTAEQEDVHFKVPKKWYKNVKKCSPSFEQYDNDDTEDDAGEDKDEVKELTKKVENLTAVITDLLEKLDIKDKKE.

Over 1–236 (MVSANGDLHL…PVRLKAPVYQ (236 aa)) the chain is Cytoplasmic. Residues 237–257 (NYLQMIFSFLFLGLYTLVVNG) form a helical membrane-spanning segment. At 258–295 (KDSERVQSFDLLESIFYVFNTGFILDELTKLYYIGYAH) the chain is on the vacuolar side. The chain crosses the membrane as a helical span at residues 296-316 (LSFWNLFNDTTYLIITFAMGF). The Cytoplasmic segment spans residues 317–335 (RAMSVTPLNAKYSSEDWDK). The chain crosses the membrane as a helical span at residues 336 to 355 (ISYRVLSCAAPFVWSRLLLY). The Vacuolar segment spans residues 356-376 (LESQRFIGIMLVILKHMMKES). A helical transmembrane segment spans residues 377–397 (IVFFFLLFLIMIGFTQGFLGL). Residues 398–405 (DSADGKRD) are Cytoplasmic-facing. Residues 406–426 (ITGPILGNLTITVLGLGSFDV) traverse the membrane as a helical segment. Residues 427 to 436 (FEEFAPPYAA) lie on the Vacuolar side of the membrane. The helical transmembrane segment at 437–457 (ILYYGYYFIVSVILLNILIAL) threads the bilayer. Over 458–675 (YSTAYQKVID…EKLDIKDKKE (218 aa)) the chain is Cytoplasmic. Threonine 636 bears the Phosphothreonine mark.

Belongs to the transient receptor (TC 1.A.4) family.

Its subcellular location is the vacuole membrane. Functionally, required for release of calcium ions from the vacuole in response to hyperosmotic shock. This chain is Calcium channel YVC1, found in Saccharomyces cerevisiae (strain ATCC 204508 / S288c) (Baker's yeast).